The chain runs to 103 residues: Large ribosomal subunit protein bL21 (103 aa).

Belongs to the bacterial ribosomal protein bL21 family. In terms of assembly, part of the 50S ribosomal subunit. Contacts protein L20.

Functionally, this protein binds to 23S rRNA in the presence of protein L20. The sequence is that of Large ribosomal subunit protein bL21 from Caldicellulosiruptor saccharolyticus (strain ATCC 43494 / DSM 8903 / Tp8T 6331).